The primary structure comprises 509 residues: ATP synthase subunit alpha (509 aa).

169-176 serves as a coordination point for ATP; sequence GDRKTGKT.

This sequence belongs to the ATPase alpha/beta chains family. In terms of assembly, F-type ATPases have 2 components, CF(1) - the catalytic core - and CF(0) - the membrane proton channel. CF(1) has five subunits: alpha(3), beta(3), gamma(1), delta(1), epsilon(1). CF(0) has three main subunits: a(1), b(2) and c(9-12). The alpha and beta chains form an alternating ring which encloses part of the gamma chain. CF(1) is attached to CF(0) by a central stalk formed by the gamma and epsilon chains, while a peripheral stalk is formed by the delta and b chains.

The protein resides in the cell membrane. The enzyme catalyses ATP + H2O + 4 H(+)(in) = ADP + phosphate + 5 H(+)(out). Its function is as follows. Produces ATP from ADP in the presence of a proton gradient across the membrane. The alpha chain is a regulatory subunit. The polypeptide is ATP synthase subunit alpha (Lacticaseibacillus casei (strain BL23) (Lactobacillus casei)).